We begin with the raw amino-acid sequence, 999 residues long: Hypoxia up-regulated protein 1 (999 aa).

The first 32 residues, 1–32 (MADKVRRQRPRRRVCWALVAVLLADLLALSDT), serve as a signal peptide directing secretion. N-linked (GlcNAc...) asparagine glycosylation is found at asparagine 155, asparagine 222, and asparagine 515. Serine 567 carries the phosphoserine modification. A disordered region spans residues 578-694 (GNTISSLFGG…KKQKPARKRR (117 aa)). The N-linked (GlcNAc...) asparagine glycan is linked to asparagine 596. Basic and acidic residues-rich tracts occupy residues 611-626 (GSKD…KEEA) and 641-672 (PKGD…KAEA). Asparagine 830, asparagine 862, and asparagine 869 each carry an N-linked (GlcNAc...) asparagine glycan. Lysine 883 is modified (N6-acetyllysine). The segment at 909 to 999 (AKFTKPRPRP…QKRPLKNDEL (91 aa)) is disordered. Asparagine 922 and asparagine 931 each carry an N-linked (GlcNAc...) asparagine glycan. The Prevents secretion from ER motif lies at 996–999 (NDEL).

This sequence belongs to the heat shock protein 70 family. Part of a large chaperone multiprotein complex comprising DNAJB11, HSP90B1, HSPA5, HYOU, PDIA2, PDIA4, PDIA6, PPIB, SDF2L1, UGGT1 and very small amounts of ERP29, but not, or at very low levels, CALR nor CANX. Highly expressed in tissues that contain well-developed endoplasmic reticulum and synthesize large amounts of secretory proteins. Highly expressed in liver and pancreas and lower expression in brain and kidney. Also expressed in macrophages within aortic atherosclerotic plaques, and in breast cancers.

It is found in the endoplasmic reticulum lumen. Functionally, has a pivotal role in cytoprotective cellular mechanisms triggered by oxygen deprivation. Promotes HSPA5/BiP-mediated ATP nucleotide exchange and thereby activates the unfolded protein response (UPR) pathway in the presence of endoplasmic reticulum stress. May play a role as a molecular chaperone and participate in protein folding. This is Hypoxia up-regulated protein 1 (HYOU1) from Homo sapiens (Human).